The chain runs to 366 residues: MISMAEALQRTPLYPLHQGARFTPFGDWEMPLQYSSILQEHQAVRQQVGMFDISHMGKLVLRGEGVLGALQTLVPTNLSQLQPGQAKYTVLLNEAGGIVDDVILYMGDGQVRCIVNAATTAKDWAWFQKYLPASIEVIDESASQVLIALQGPAATATLSPLCDRPLGEIKTYRHAPVNLLGQPAWIARTGYTGEDGWEILVPAELGQQLWQTLLAAGVTPCGLGARDTLRLEAAMLLYGQDMDEQTTPLEAGLDGLIDWQKPDFVGRAALLAQKQQGIERQLVGLELLGKGIARHGYPIYAGAQAVGEVTSGTLSPTLGKAIALGYVFPEFAHIGRELAVQVRDRWVPAVVVPRPFYRRPRSTAKI.

This sequence belongs to the GcvT family. In terms of assembly, the glycine cleavage system is composed of four proteins: P, T, L and H.

The catalysed reaction is N(6)-[(R)-S(8)-aminomethyldihydrolipoyl]-L-lysyl-[protein] + (6S)-5,6,7,8-tetrahydrofolate = N(6)-[(R)-dihydrolipoyl]-L-lysyl-[protein] + (6R)-5,10-methylene-5,6,7,8-tetrahydrofolate + NH4(+). In terms of biological role, the glycine cleavage system catalyzes the degradation of glycine. This is Aminomethyltransferase from Thermosynechococcus vestitus (strain NIES-2133 / IAM M-273 / BP-1).